Consider the following 371-residue polypeptide: MKPSLFVGVMSGTSADGIDVALVDFSQATPALVGSESHAYPNHIREHVLGLCTPANNEIDALGQLDVELGKLYAHAVNSLLANTQTPAAQIQAIGCHGQTLRHRPLGSGYASPFSLQIGDPNTIAALTGIATVADFRRKDVALGGQGAPLVPAFHAAVFGSTTTDRCIANIGGIANITCLPANSHIAGYDTGPGNALMDAWIEANQGAKYDAGGAWAQTGKLNQPLLEILLQHPYFALPAPKSTGREDFNMTWLQACLNQTNLPLPPEDVQATLTELTAISLTDGVKRSCPNAELVICGGGAFNTALLERIQHHYPQKPTVTSQQLGIAPTWVEAMAFAWLAMRRLENQPGNVPAVTGASREAVLGGIYTP.

12 to 19 (GTSADGID) contacts ATP.

The protein belongs to the anhydro-N-acetylmuramic acid kinase family.

The catalysed reaction is 1,6-anhydro-N-acetyl-beta-muramate + ATP + H2O = N-acetyl-D-muramate 6-phosphate + ADP + H(+). The protein operates within amino-sugar metabolism; 1,6-anhydro-N-acetylmuramate degradation. It functions in the pathway cell wall biogenesis; peptidoglycan recycling. In terms of biological role, catalyzes the specific phosphorylation of 1,6-anhydro-N-acetylmuramic acid (anhMurNAc) with the simultaneous cleavage of the 1,6-anhydro ring, generating MurNAc-6-P. Is required for the utilization of anhMurNAc either imported from the medium or derived from its own cell wall murein, and thus plays a role in cell wall recycling. The protein is Anhydro-N-acetylmuramic acid kinase of Saccharophagus degradans (strain 2-40 / ATCC 43961 / DSM 17024).